We begin with the raw amino-acid sequence, 856 residues long: DNA mismatch repair protein MutS (856 aa).

600-607 (GPNMSGKS) is an ATP binding site.

Belongs to the DNA mismatch repair MutS family.

Its function is as follows. This protein is involved in the repair of mismatches in DNA. It is possible that it carries out the mismatch recognition step. This protein has a weak ATPase activity. This is DNA mismatch repair protein MutS from Lactobacillus acidophilus (strain ATCC 700396 / NCK56 / N2 / NCFM).